A 698-amino-acid chain; its full sequence is Elongation factor G 1 (698 aa).

One can recognise a tr-type G domain in the interval 8-290; sequence ERYRNIGICA…AVIEFLPAPV (283 aa). Residues 17–24, 88–92, and 142–145 each bind GTP; these read AHVDAGKT, DTPGH, and NKMD.

The protein belongs to the TRAFAC class translation factor GTPase superfamily. Classic translation factor GTPase family. EF-G/EF-2 subfamily.

The protein resides in the cytoplasm. Its function is as follows. Catalyzes the GTP-dependent ribosomal translocation step during translation elongation. During this step, the ribosome changes from the pre-translocational (PRE) to the post-translocational (POST) state as the newly formed A-site-bound peptidyl-tRNA and P-site-bound deacylated tRNA move to the P and E sites, respectively. Catalyzes the coordinated movement of the two tRNA molecules, the mRNA and conformational changes in the ribosome. In Aliivibrio fischeri (strain ATCC 700601 / ES114) (Vibrio fischeri), this protein is Elongation factor G 1.